The chain runs to 535 residues: Intercellular adhesion molecule 1 (535 aa).

Residues 1–27 (MALGAAPAAQLALLALLGTLLPGPGGA) form the signal peptide. Topologically, residues 28 to 480 (GISIHPSKAI…LNVLHGQNIL (453 aa)) are extracellular. An Ig-like C2-type 1 domain is found at 41–102 (GDSLTVNCSN…SNCHKEQTIA (62 aa)). N-linked (GlcNAc...) asparagine glycosylation occurs at Asn-47. Cystine bridges form between Cys-48-Cys-91 and Cys-52-Cys-95. Asn-105 and Asn-131 each carry an N-linked (GlcNAc...) asparagine glycan. The 67-residue stretch at 127–193 (GEELNLSCLV…FSCRWELDLR (67 aa)) folds into the Ig-like C2-type 2 domain. A disulfide bridge connects residues Cys-134 and Cys-186. A Cell attachment site; atypical motif is present at residues 151 to 153 (RGE). Residues Asn-183, Asn-202, Asn-236, Asn-262, Asn-302, Asn-341, Asn-357, Asn-366, Asn-404, and Asn-428 are each glycosylated (N-linked (GlcNAc...) asparagine). The region spanning 230–295 (GSRWPVNCTL…LKCSVTLGEV (66 aa)) is the Ig-like C2-type 3 domain. Cys-237 and Cys-288 are disulfide-bonded. One can recognise an Ig-like C2-type 4 domain in the interval 323–376 (WTTVTVECVTRDGAVVKLNGTSAVPPGPRAQLKLNASASDHRSNFSCSAALEIA). Cystine bridges form between Cys-330/Cys-369, Cys-401/Cys-417, Cys-417/Cys-456, and Cys-429/Cys-456. The Ig-like C2-type 5 domain maps to 410–463 (GSEQTLKCEAQGNPIPKLNCSRKGDGASLPIGDLRPVRREVAGTYLCRATSARG). A helical membrane pass occupies residues 481–503 (DIVIPVVAVTLILGALGTAGYVY). Topologically, residues 504 to 535 (NYQRKIQKYELQKARKAQEEAALKLNAQSTPP) are cytoplasmic. Thr-533 is modified (phosphothreonine).

It belongs to the immunoglobulin superfamily. ICAM family. Homodimer. Interacts with MUC1 and promotes cell aggregation in epithelial cells. Interacts with ARHGEF26/SGEF. Interacts (on T cell side) with CD81, CD247 and CD9 at immunological synapses between antigen-presenting cells and T cells. In terms of processing, monoubiquitinated, which is promoted by MARCH9 and leads to endocytosis.

It is found in the membrane. Its function is as follows. ICAM proteins are ligands for the leukocyte adhesion protein LFA-1 (integrin alpha-L/beta-2). During leukocyte trans-endothelial migration, ICAM1 engagement promotes the assembly of endothelial apical cups through ARHGEF26/SGEF and RHOG activation. This is Intercellular adhesion molecule 1 (ICAM1) from Bos taurus (Bovine).